Consider the following 184-residue polypeptide: MNRRSKWLWIEPITGSRKRSNFFWACILFLGSLGFFLVGISSYFGENLIPLLSSQQILFVPQGIVMCFYGIAGLFISSYLWCTILFNVGSGYNKFDKKKGIVCLFRWGFPGINRRIFPRFLMKDIQMIKMEIQEGISPRRVLYMEIKGRQDIPLTRTGDNVNLREIEQKAAESARFLRVSIEGF.

2 helical membrane passes run 21–43 (NFFW…ISSY) and 58–78 (LFVP…FISS).

The protein belongs to the Ycf4 family.

The protein resides in the plastid. It is found in the chloroplast thylakoid membrane. Its function is as follows. Seems to be required for the assembly of the photosystem I complex. This Pinus thunbergii (Japanese black pine) protein is Photosystem I assembly protein Ycf4.